The following is a 546-amino-acid chain: Protein FAM124A (546 aa).

Disordered regions lie at residues 1-37 (MDPK…SELS), 286-360 (FPKP…FQRS), and 488-546 (SSSS…EFYI). The span at 24-36 (SDYSHLSSTSSEL) shows a compositional bias: low complexity. A compositionally biased stretch (basic residues) spans 286–302 (FPKPGRVHHASEKKRHS). Composition is skewed to polar residues over residues 304–324 (PLPS…SPLN) and 347–360 (ANST…FQRS). Residues 488–511 (SSSSATARAAPPAPSTSTLTDSSP) show a composition bias toward low complexity.

The protein belongs to the FAM124 family.

The polypeptide is Protein FAM124A (FAM124A) (Homo sapiens (Human)).